The sequence spans 101 residues: Small ribosomal subunit protein uS14A (101 aa).

This sequence belongs to the universal ribosomal protein uS14 family. As to quaternary structure, part of the 30S ribosomal subunit. Contacts proteins S3 and S10.

In terms of biological role, binds 16S rRNA, required for the assembly of 30S particles and may also be responsible for determining the conformation of the 16S rRNA at the A site. This chain is Small ribosomal subunit protein uS14A, found in Salinispora arenicola (strain CNS-205).